A 337-amino-acid chain; its full sequence is MIRVAINGFGRIGRNFARCWLGRENTNIELVAVNDTSDPRTNAHLLKYDSMLGKLKNVDITADDNSITVNGKTIKCVSDRNPENLPWKEWEIDLIIEATGVFVSKEGATKHINAGAKKVLITAPGKNEDGTFVMGVNHHDYDHNLHNIISNASCTTNCLAPIAKVLNDKFGIIKGSMTTTHSYTGDQRLLDASHRDLRRARAAAINIVPTSTGAAKAVALVIPELKGKLNGVALRVPTPNVSMVDFVVQVEKRTITEEVNQALKDASEGPLKGILDYSELQLVSSDYQGTDASSIVDANLTLVMGNDLVKVMAWYDNEWGYSQRVLDLAELVAEKWV.

Residues 11–12, aspartate 35, arginine 80, and threonine 122 each bind NADP(+); that span reads RI. Residues 153 to 155, threonine 184, arginine 199, 212 to 213, and arginine 235 each bind D-glyceraldehyde 3-phosphate; these read SCT and TG. The active-site Nucleophile is the cysteine 154. Position 317 (asparagine 317) interacts with NADP(+).

In terms of assembly, homotetramer.

It is found in the cytoplasm. It carries out the reaction D-glyceraldehyde 3-phosphate + phosphate + NADP(+) = (2R)-3-phospho-glyceroyl phosphate + NADPH + H(+). It catalyses the reaction D-glyceraldehyde 3-phosphate + phosphate + NAD(+) = (2R)-3-phospho-glyceroyl phosphate + NADH + H(+). Its pathway is carbohydrate biosynthesis; Calvin cycle. Gap2 has a major role in carbon fixation as a component of the Calvin cycle. Catalyzes the oxidative phosphorylation of glyceraldehyde 3-phosphate (G3P) to 1,3-bisphosphoglycerate (BPG) using the cofactor NADP. The first reaction step involves the formation of a hemiacetal intermediate between G3P and a cysteine residue, and this hemiacetal intermediate is then oxidized to a thioester, with concomitant reduction of NADP to NADPH. The reduced NADPH is then exchanged with the second NAD, and the thioester is attacked by a nucleophilic inorganic phosphate to produce BPG. The sequence is that of Glyceraldehyde-3-phosphate dehydrogenase 2 (gap2) from Nostoc sp. (strain PCC 7120 / SAG 25.82 / UTEX 2576).